Consider the following 363-residue polypeptide: Aminopyrrolnitrin oxygenase PrnD (363 aa).

A Rieske domain is found at 29–137 (WYVAMRSNEL…TAERYGYVWV (109 aa)). The [2Fe-2S] cluster site is built by cysteine 69, histidine 71, cysteine 88, and histidine 91.

As to quaternary structure, homodimer. Requires [2Fe-2S] cluster as cofactor. The cofactor is Fe cation. It depends on FMN as a cofactor.

The catalysed reaction is aminopyrrolnitrin + NADPH + 2 O2 + H(+) = pyrrolnitrin + NADP(+) + 2 H2O. It functions in the pathway antibiotic biosynthesis. Functionally, involved in the biosynthesis of the antifungal antibiotic pyrrolnitrin (PRN). Catalyzes the oxidation of the amino group of aminopyrrolnitrin (APRN) to a nitro group to form PRN. It has high substrate specificity toward physiological substrate aminopyrrolnitrin, p-aminobenzylamine (pABA), p-aminobenzyl alcohol, and p-aminophenyl alanine. The chain is Aminopyrrolnitrin oxygenase PrnD (prnD) from Pseudomonas fluorescens.